A 273-amino-acid chain; its full sequence is Tryptase (273 aa).

An N-terminal signal peptide occupies residues 1–18; that stretch reads MLKLLLLTLPLLSSLVHA. Residues 19 to 28 constitute a propeptide, activation peptide; it reads APSLAMPREG. The Peptidase S1 domain maps to 29 to 270; the sequence is IVGGQEASGN…YLDWIYRYVP (242 aa). Asn-49 carries N-linked (GlcNAc...) asparagine glycosylation. An intrachain disulfide couples Cys-57 to Cys-73. Residues His-72 and Asp-119 each act as charge relay system in the active site. Disulfide bonds link Cys-153/Cys-228, Cys-186/Cys-209, and Cys-218/Cys-246. Ser-222 functions as the Charge relay system in the catalytic mechanism.

This sequence belongs to the peptidase S1 family. Tryptase subfamily. Homotetramer. In terms of processing, glycosylated. Mast cells.

The protein resides in the secreted. The enzyme catalyses Preferential cleavage: Arg-|-Xaa, Lys-|-Xaa, but with more restricted specificity than trypsin.. Its function is as follows. Tryptase is the major neutral protease present in mast cells and is secreted upon the coupled activation-degranulation response of this cell type. May play a role in innate immunity. The chain is Tryptase (Tpsab1) from Rattus norvegicus (Rat).